The sequence spans 160 residues: Putative antiporter subunit mnhE2 (160 aa).

3 consecutive transmembrane segments (helical) span residues 22–42 (HFKFSTFFSGYLIGLIVIYIL), 55–75 (IWVAIKFLGVYLYQLITSSIS), and 100–120 (SDWAITFLTILIIITPGSTVI).

It belongs to the CPA3 antiporters (TC 2.A.63) subunit E family. As to quaternary structure, may form a heterooligomeric complex that consists of seven subunits: mnhA2, mnhB2, mnhC2, mnhD2, mnhE2, mnhF2 and mnhG2.

It is found in the cell membrane. The protein is Putative antiporter subunit mnhE2 (mnhE2) of Staphylococcus aureus (strain Mu3 / ATCC 700698).